The sequence spans 266 residues: GTP cyclohydrolase FolE2 (266 aa).

This sequence belongs to the GTP cyclohydrolase IV family.

It catalyses the reaction GTP + H2O = 7,8-dihydroneopterin 3'-triphosphate + formate + H(+). It participates in cofactor biosynthesis; 7,8-dihydroneopterin triphosphate biosynthesis; 7,8-dihydroneopterin triphosphate from GTP: step 1/1. Functionally, converts GTP to 7,8-dihydroneopterin triphosphate. This Burkholderia mallei (strain ATCC 23344) protein is GTP cyclohydrolase FolE2.